The sequence spans 283 residues: Shikimate dehydrogenase (NADP(+)) (283 aa).

Shikimate-binding positions include 16–18 and Thr63; that span reads SLS. Residue Lys67 is the Proton acceptor of the active site. Residue Asp79 coordinates NADP(+). 2 residues coordinate shikimate: Asn88 and Asp103. Residues 128 to 132, Ala223, and Gly243 each bind NADP(+); that span reads GAGGA.

The protein belongs to the shikimate dehydrogenase family. In terms of assembly, homodimer.

It carries out the reaction shikimate + NADP(+) = 3-dehydroshikimate + NADPH + H(+). Its pathway is metabolic intermediate biosynthesis; chorismate biosynthesis; chorismate from D-erythrose 4-phosphate and phosphoenolpyruvate: step 4/7. Involved in the biosynthesis of the chorismate, which leads to the biosynthesis of aromatic amino acids. Catalyzes the reversible NADPH linked reduction of 3-dehydroshikimate (DHSA) to yield shikimate (SA). The polypeptide is Shikimate dehydrogenase (NADP(+)) (Xanthomonas campestris pv. campestris (strain B100)).